Here is a 261-residue protein sequence, read N- to C-terminus: Calcium-binding protein 8 (261 aa).

Residues 1–41 (MRLPEQPGDGKPENETKGDQETPERGEEPRRSPAPDFPTWE) are disordered. Residues 1–234 (MRLPEQPGDG…QNRQTCVRKS (234 aa)) lie on the Cytoplasmic side of the membrane. Residues 8–33 (GDGKPENETKGDQETPERGEEPRRSP) show a composition bias toward basic and acidic residues. EF-hand domains are found at residues 78–113 (EELD…LGYM) and 114–149 (PSEV…KLVS). Positions 91, 93, 95, 102, 127, 129, 131, 133, and 138 each coordinate Ca(2+). Residues 235–255 (LICAFAMAFIISVMLIAANQI) form a helical; Anchor for type IV membrane protein membrane-spanning segment. Residues 256–261 (LRSGME) lie on the Extracellular side of the membrane.

In terms of assembly, interacts with PI4KB. This binding competes with FREQ/NCS1 binding in a calcium-dependent manner. Brain-specific. High expression in the cerebellum, hippocampus, and cortex.

It localises to the golgi apparatus. It is found in the trans-Golgi network membrane. Its subcellular location is the cytoplasm. The protein localises to the perinuclear region. The protein resides in the cell membrane. Its function is as follows. Negatively regulates Golgi-to-plasma membrane trafficking by interacting with PI4KB and inhibiting its activity. May play a role in the physiology of neurons and is potentially important in memory and learning. The protein is Calcium-binding protein 8 (Caln1) of Mus musculus (Mouse).